A 267-amino-acid chain; its full sequence is GTP cyclohydrolase FolE2 (267 aa).

It belongs to the GTP cyclohydrolase IV family.

It carries out the reaction GTP + H2O = 7,8-dihydroneopterin 3'-triphosphate + formate + H(+). The protein operates within cofactor biosynthesis; 7,8-dihydroneopterin triphosphate biosynthesis; 7,8-dihydroneopterin triphosphate from GTP: step 1/1. Converts GTP to 7,8-dihydroneopterin triphosphate. This Nitrosomonas eutropha (strain DSM 101675 / C91 / Nm57) protein is GTP cyclohydrolase FolE2.